The sequence spans 898 residues: Neutral alpha-glucosidase C (898 aa).

The disordered stretch occupies residues 154-173 (QRATKGNGQNTPAATSQENQ). Positions 157 to 171 (TKGNGQNTPAATSQE) are enriched in polar residues. Asp495 functions as the Nucleophile in the catalytic mechanism. Glu498 is a catalytic residue. The active-site Proton donor is Asp571.

Belongs to the glycosyl hydrolase 31 family.

The catalysed reaction is Hydrolysis of terminal, non-reducing (1-&gt;4)-linked alpha-D-glucose residues with release of alpha-D-glucose.. Its function is as follows. Has alpha-glucosidase activity. This Mus musculus (Mouse) protein is Neutral alpha-glucosidase C (Ganc).